The primary structure comprises 308 residues: Bifunctional protein FolD (308 aa).

NADP(+) contacts are provided by residues 171–173 (GRS), Ser198, and Ile239.

The protein belongs to the tetrahydrofolate dehydrogenase/cyclohydrolase family. As to quaternary structure, homodimer.

The catalysed reaction is (6R)-5,10-methylene-5,6,7,8-tetrahydrofolate + NADP(+) = (6R)-5,10-methenyltetrahydrofolate + NADPH. The enzyme catalyses (6R)-5,10-methenyltetrahydrofolate + H2O = (6R)-10-formyltetrahydrofolate + H(+). It functions in the pathway one-carbon metabolism; tetrahydrofolate interconversion. In terms of biological role, catalyzes the oxidation of 5,10-methylenetetrahydrofolate to 5,10-methenyltetrahydrofolate and then the hydrolysis of 5,10-methenyltetrahydrofolate to 10-formyltetrahydrofolate. The sequence is that of Bifunctional protein FolD from Borreliella burgdorferi (strain ATCC 35210 / DSM 4680 / CIP 102532 / B31) (Borrelia burgdorferi).